A 260-amino-acid chain; its full sequence is Putative ABC transporter ATP-binding protein PF0068 (260 aa).

The region spanning isoleucine 2–proline 234 is the ABC transporter domain. Glycine 34–threonine 41 contributes to the ATP binding site.

This sequence belongs to the ABC transporter superfamily.

The protein localises to the cell membrane. Its function is as follows. Probably part of an ABC transporter complex. Responsible for energy coupling to the transport system. This chain is Putative ABC transporter ATP-binding protein PF0068, found in Pyrococcus furiosus (strain ATCC 43587 / DSM 3638 / JCM 8422 / Vc1).